We begin with the raw amino-acid sequence, 358 residues long: tRNA pseudouridine synthase B (358 aa).

Positions M1–V50 are disordered. The Nucleophile role is filled by D87.

It belongs to the pseudouridine synthase TruB family. Type 1 subfamily.

It catalyses the reaction uridine(55) in tRNA = pseudouridine(55) in tRNA. Functionally, responsible for synthesis of pseudouridine from uracil-55 in the psi GC loop of transfer RNAs. The protein is tRNA pseudouridine synthase B of Nitrobacter winogradskyi (strain ATCC 25391 / DSM 10237 / CIP 104748 / NCIMB 11846 / Nb-255).